We begin with the raw amino-acid sequence, 964 residues long: Cycloisomaltooligosaccharide glucanotransferase (964 aa).

The N-terminal stretch at 1-30 is a signal peptide; sequence MRVKILPLVFMTLLLIVPSQMLLPSGQANA. 2 consecutive CBM6 domains span residues 413 to 538 and 740 to 863; these read DRYE…LTLG and NMYE…LKLD.

Belongs to the glycosyl hydrolase 66 family.

It catalyses the reaction cyclizes part of a (1-&gt;6)-alpha-D-glucan chain by formation of a (1-&gt;6)-alpha-D-glucosidic bond.. Functionally, produces cycloisomaltooligosaccharide from dextran. The chain is Cycloisomaltooligosaccharide glucanotransferase (cit) from Niallia circulans (Bacillus circulans).